The sequence spans 243 residues: Protein GID8 homolog (243 aa).

A LisH domain is found at 40–72 (RKEDMNTLVMNFLVTEGYVEAAEKFQRESGTKP). The CTLH domain occupies 78 to 135 (TITDRMAVKKAVQNGNVEDAIEKVNDLNPEILDTNPELFFHLQQQRLIELIRQGKTEE).

This sequence belongs to the GID8 family. As to quaternary structure, interacts with RANBPM.

It localises to the cytoplasm. This chain is Protein GID8 homolog, found in Arabidopsis thaliana (Mouse-ear cress).